A 218-amino-acid polypeptide reads, in one-letter code: Protein-methionine-sulfoxide reductase heme-binding subunit MsrQ (218 aa).

The next 5 helical transmembrane spans lie at 14 to 34 (LVHA…WQVW), 60 to 80 (LLLI…AVVI), 86 to 106 (LGLY…TLDL), 121 to 141 (PYIT…ITST), and 155 to 175 (LHML…WLVK).

This sequence belongs to the MsrQ family. Heterodimer of a catalytic subunit (MsrP) and a heme-binding subunit (MsrQ). The cofactor is FMN. Heme b serves as cofactor.

The protein resides in the cell inner membrane. Its function is as follows. Part of the MsrPQ system that repairs oxidized periplasmic proteins containing methionine sulfoxide residues (Met-O), using respiratory chain electrons. Thus protects these proteins from oxidative-stress damage caused by reactive species of oxygen and chlorine generated by the host defense mechanisms. MsrPQ is essential for the maintenance of envelope integrity under bleach stress, rescuing a wide series of structurally unrelated periplasmic proteins from methionine oxidation. MsrQ provides electrons for reduction to the reductase catalytic subunit MsrP, using the quinone pool of the respiratory chain. In Xanthomonas axonopodis pv. citri (strain 306), this protein is Protein-methionine-sulfoxide reductase heme-binding subunit MsrQ.